Consider the following 72-residue polypeptide: Penaeidin-2d (72 aa).

The first 21 residues, 1–21 (MRLVVCLVFLASFALVCQGGA), serve as a signal peptide directing secretion. Gln22 is modified (pyrrolidone carboxylic acid). Intrachain disulfides connect Cys45–Cys59, Cys48–Cys66, and Cys60–Cys67. Position 71 is a lysine amide (Lys71).

Belongs to the penaeidin family.

Its subcellular location is the cytoplasmic granule. Functionally, antibacterial and antifungal activity. Presents chitin-binding activity. The protein is Penaeidin-2d of Penaeus setiferus (Atlantic white shrimp).